The following is a 98-amino-acid chain: ATP synthase subunit alpha, chloroplastic (98 aa).

Belongs to the ATPase alpha/beta chains family. F-type ATPases have 2 components, CF(1) - the catalytic core - and CF(0) - the membrane proton channel. CF(1) has five subunits: alpha(3), beta(3), gamma(1), delta(1), epsilon(1). CF(0) has four main subunits: a, b, b' and c.

The protein localises to the plastid. It localises to the chloroplast thylakoid membrane. The enzyme catalyses ATP + H2O + 4 H(+)(in) = ADP + phosphate + 5 H(+)(out). Produces ATP from ADP in the presence of a proton gradient across the membrane. The alpha chain is a regulatory subunit. The sequence is that of ATP synthase subunit alpha, chloroplastic (atpA) from Populus euphratica (Euphrates poplar).